A 155-amino-acid polypeptide reads, in one-letter code: Large ribosomal subunit protein uL22c (155 aa).

This sequence belongs to the universal ribosomal protein uL22 family. Part of the 50S ribosomal subunit.

It is found in the plastid. Its subcellular location is the chloroplast. Its function is as follows. This protein binds specifically to 23S rRNA. Functionally, the globular domain of the protein is located near the polypeptide exit tunnel on the outside of the subunit, while an extended beta-hairpin is found that lines the wall of the exit tunnel in the center of the 70S ribosome. The protein is Large ribosomal subunit protein uL22c (rpl22) of Atropa belladonna (Belladonna).